The sequence spans 279 residues: Tryptophan synthase alpha chain (279 aa).

Residues Glu50 and Asp61 each act as proton acceptor in the active site.

It belongs to the TrpA family. Tetramer of two alpha and two beta chains.

It catalyses the reaction (1S,2R)-1-C-(indol-3-yl)glycerol 3-phosphate + L-serine = D-glyceraldehyde 3-phosphate + L-tryptophan + H2O. Its pathway is amino-acid biosynthesis; L-tryptophan biosynthesis; L-tryptophan from chorismate: step 5/5. In terms of biological role, the alpha subunit is responsible for the aldol cleavage of indoleglycerol phosphate to indole and glyceraldehyde 3-phosphate. This is Tryptophan synthase alpha chain from Brucella suis (strain ATCC 23445 / NCTC 10510).